The chain runs to 140 residues: MLPGIGFSELLLIGLAALIIIGPKDLPMMMRTLGQLMGKGRRMAREFQAAFDDIARQSELDELKKEIQDLRQSNTFKSAQDDLAAYEADVNSAVMREHPVSPPPPATPPAPPAELPPEAAPHADSQNAPPEADPAKGDRT.

A helical membrane pass occupies residues 2–22 (LPGIGFSELLLIGLAALIIIG). The disordered stretch occupies residues 90-140 (VNSAVMREHPVSPPPPATPPAPPAELPPEAAPHADSQNAPPEADPAKGDRT). A compositionally biased stretch (pro residues) spans 100–119 (VSPPPPATPPAPPAELPPEA).

The protein belongs to the TatB family. In terms of assembly, the Tat system comprises two distinct complexes: a TatABC complex, containing multiple copies of TatA, TatB and TatC subunits, and a separate TatA complex, containing only TatA subunits. Substrates initially bind to the TatABC complex, which probably triggers association of the separate TatA complex to form the active translocon.

It localises to the cell inner membrane. Functionally, part of the twin-arginine translocation (Tat) system that transports large folded proteins containing a characteristic twin-arginine motif in their signal peptide across membranes. Together with TatC, TatB is part of a receptor directly interacting with Tat signal peptides. TatB may form an oligomeric binding site that transiently accommodates folded Tat precursor proteins before their translocation. This is Sec-independent protein translocase protein TatB from Hyphomonas neptunium (strain ATCC 15444).